A 279-amino-acid chain; its full sequence is Undecaprenyl-diphosphatase (279 aa).

The next 7 membrane-spanning stretches (helical) occupy residues 10-30 (FICF…FLPI), 48-68 (LGVS…IYYF), 96-116 (LFLY…LIKL), 128-148 (GLFS…LSEI), 203-223 (SFLV…FSLF), 229-249 (IDII…IFAI), and 259-279 (NNTL…LTTL).

It belongs to the UppP family.

Its subcellular location is the cell inner membrane. It carries out the reaction di-trans,octa-cis-undecaprenyl diphosphate + H2O = di-trans,octa-cis-undecaprenyl phosphate + phosphate + H(+). Catalyzes the dephosphorylation of undecaprenyl diphosphate (UPP). Confers resistance to bacitracin. The sequence is that of Undecaprenyl-diphosphatase from Prochlorococcus marinus (strain NATL2A).